Reading from the N-terminus, the 447-residue chain is Tubulin alpha-2 chain (447 aa).

Positions 11, 71, 144, 145, 179, 206, and 228 each coordinate GTP. Glu-71 is a binding site for Mg(2+). The active site involves Glu-254.

Belongs to the tubulin family. As to quaternary structure, dimer of alpha and beta chains. A typical microtubule is a hollow water-filled tube with an outer diameter of 25 nm and an inner diameter of 15 nM. Alpha-beta heterodimers associate head-to-tail to form protofilaments running lengthwise along the microtubule wall with the beta-tubulin subunit facing the microtubule plus end conferring a structural polarity. Microtubules usually have 13 protofilaments but different protofilament numbers can be found in some organisms and specialized cells. Mg(2+) serves as cofactor. Undergoes a tyrosination/detyrosination cycle, the cyclic removal and re-addition of a C-terminal tyrosine residue by the enzymes tubulin tyrosine carboxypeptidase (TTCP) and tubulin tyrosine ligase (TTL), respectively.

Its subcellular location is the cytoplasm. The protein localises to the cytoskeleton. The catalysed reaction is GTP + H2O = GDP + phosphate + H(+). Tubulin is the major constituent of microtubules, a cylinder consisting of laterally associated linear protofilaments composed of alpha- and beta-tubulin heterodimers. Microtubules grow by the addition of GTP-tubulin dimers to the microtubule end, where a stabilizing cap forms. Below the cap, tubulin dimers are in GDP-bound state, owing to GTPase activity of alpha-tubulin. The protein is Tubulin alpha-2 chain (TUBA2) of Eleusine indica (Goosegrass).